The sequence spans 197 residues: UPF0301 protein BAV3012 (197 aa).

It belongs to the UPF0301 (AlgH) family.

The sequence is that of UPF0301 protein BAV3012 from Bordetella avium (strain 197N).